Consider the following 94-residue polypeptide: Large ribosomal subunit protein bL27 (94 aa).

The propeptide occupies 1-9; sequence MNLANLQLF. The segment at 11 to 33 is disordered; that stretch reads HKKGGGSTSNGRDSQAKRLGAKA.

It belongs to the bacterial ribosomal protein bL27 family. The N-terminus is cleaved by ribosomal processing cysteine protease Prp.

The protein is Large ribosomal subunit protein bL27 of Streptococcus agalactiae serotype V (strain ATCC BAA-611 / 2603 V/R).